Here is a 622-residue protein sequence, read N- to C-terminus: Phosphoribomutase (622 aa).

Substrate is bound by residues Thr57, Arg61, 158-159, and Lys168; that span reads SH. Ser158 serves as the catalytic Phosphoserine intermediate. Ser158 contacts Mg(2+). Ser158 is modified (phosphoserine). Residues Asp325, Asp327, and Asp329 each coordinate Mg(2+). Residues 329-330, Thr404, 428-430, and Lys442 each bind substrate; these read DR and EEA.

Belongs to the phosphohexose mutase family. Requires Mg(2+) as cofactor.

Its subcellular location is the cytoplasm. The protein localises to the nucleus. It catalyses the reaction alpha-D-ribose 1-phosphate = D-ribose 5-phosphate. Its function is as follows. Major phosphoribomutase that converts ribose 1-phosphate to ribose 5-phosphate. Involved in ribose salvage via the pentose phosphate pathway. The chain is Phosphoribomutase from Saccharomyces cerevisiae (strain ATCC 204508 / S288c) (Baker's yeast).